The following is a 189-amino-acid chain: Large ribosomal subunit protein uL13 (189 aa).

This sequence belongs to the universal ribosomal protein uL13 family.

The polypeptide is Large ribosomal subunit protein uL13 (rpl13a) (Salmo trutta (Brown trout)).